A 278-amino-acid polypeptide reads, in one-letter code: Sulfur carrier protein FdhD (278 aa).

Cys121 (cysteine persulfide intermediate) is an active-site residue. 260–265 (FCKPGR) provides a ligand contact to Mo-bis(molybdopterin guanine dinucleotide).

It belongs to the FdhD family.

Its subcellular location is the cytoplasm. In terms of biological role, required for formate dehydrogenase (FDH) activity. Acts as a sulfur carrier protein that transfers sulfur from IscS to the molybdenum cofactor prior to its insertion into FDH. In Klebsiella pneumoniae subsp. pneumoniae (strain ATCC 700721 / MGH 78578), this protein is Sulfur carrier protein FdhD.